The sequence spans 455 residues: Gamma-glutamyl phosphate reductase (455 aa).

Belongs to the gamma-glutamyl phosphate reductase family.

The protein localises to the cytoplasm. It carries out the reaction L-glutamate 5-semialdehyde + phosphate + NADP(+) = L-glutamyl 5-phosphate + NADPH + H(+). Its pathway is amino-acid biosynthesis; L-proline biosynthesis; L-glutamate 5-semialdehyde from L-glutamate: step 2/2. Functionally, catalyzes the NADPH-dependent reduction of L-glutamate 5-phosphate into L-glutamate 5-semialdehyde and phosphate. The product spontaneously undergoes cyclization to form 1-pyrroline-5-carboxylate. The chain is Gamma-glutamyl phosphate reductase from Synechococcus sp. (strain JA-3-3Ab) (Cyanobacteria bacterium Yellowstone A-Prime).